Here is a 101-residue protein sequence, read N- to C-terminus: MSEKCKKDDWVEIHYVVLEARERTGDIPEDTRKVPLECWIKGWAEKEGTVGEEVTIRTPANRYVKGTLTRINPEYTHTFGPCASELSAIGQELRATLKEGK.

This sequence belongs to the OrtA family. As to quaternary structure, heterodimer with OrtB.

The enzyme catalyses D-alanine + acetyl-CoA = (2R)-2-amino-4-oxopentanoate + CoA. Its function is as follows. Involved in the ornithine fermentation pathway. Catalyzes the thiolytic cleavage of 2-amino-4-ketopentanoate (AKP) with coenzyme A (CoA) to form acetyl-CoA and alanine. It is strictly specific for AKP. The protein is 2-amino-4-ketopentanoate thiolase alpha subunit of Unknown prokaryotic organism.